A 239-amino-acid chain; its full sequence is Putative antitoxin VapB45 (239 aa).

Possibly the antitoxin component of a type II toxin-antitoxin (TA) system. Its cognate toxin is VapC45. The polypeptide is Putative antitoxin VapB45 (Mycobacterium tuberculosis (strain ATCC 25618 / H37Rv)).